A 134-amino-acid chain; its full sequence is Fluoride-specific ion channel FluC (134 aa).

The next 4 helical transmembrane spans lie at 7–27 (LAVA…TIMA), 38–58 (GTLL…IVLV), 69–89 (LFLF…AAES), and 110–130 (VGSL…LLGH). Residues G77 and T80 each contribute to the Na(+) site.

The protein belongs to the fluoride channel Fluc/FEX (TC 1.A.43) family.

Its subcellular location is the cell inner membrane. The catalysed reaction is fluoride(in) = fluoride(out). With respect to regulation, na(+) is not transported, but it plays an essential structural role and its presence is essential for fluoride channel function. Its function is as follows. Fluoride-specific ion channel. Important for reducing fluoride concentration in the cell, thus reducing its toxicity. This chain is Fluoride-specific ion channel FluC, found in Legionella pneumophila subsp. pneumophila (strain Philadelphia 1 / ATCC 33152 / DSM 7513).